The primary structure comprises 334 residues: Phosphatidylglycerol--prolipoprotein diacylglyceryl transferase (334 aa).

Helical transmembrane passes span 22 to 42 (FLPFRIQTYALIILTGIVVAA), 54 to 74 (AEPGVVLDVLLWAVPLGIIGA), 105 to 125 (IWEGGNAIFGALIGGAVGVGI), and 131 to 151 (GLRFWTFADALAPALLLAQAI). Residue R153 coordinates a 1,2-diacyl-sn-glycero-3-phospho-(1'-sn-glycerol). 2 helical membrane-spanning segments follow: residues 191-211 (LFQPLFLYEIVWNVIGVFVIL) and 251-271 (FLGIPSNVWAAFAAVVLGAII). A disordered region spans residues 296–334 (PQAEVESGETDPEEILHADDDEERTGTHKPQATSLSGSN). Acidic residues predominate over residues 301–318 (ESGETDPEEILHADDDEE). Polar residues predominate over residues 323–334 (HKPQATSLSGSN).

This sequence belongs to the Lgt family.

It localises to the cell membrane. It carries out the reaction L-cysteinyl-[prolipoprotein] + a 1,2-diacyl-sn-glycero-3-phospho-(1'-sn-glycerol) = an S-1,2-diacyl-sn-glyceryl-L-cysteinyl-[prolipoprotein] + sn-glycerol 1-phosphate + H(+). Its pathway is protein modification; lipoprotein biosynthesis (diacylglyceryl transfer). Its function is as follows. Catalyzes the transfer of the diacylglyceryl group from phosphatidylglycerol to the sulfhydryl group of the N-terminal cysteine of a prolipoprotein, the first step in the formation of mature lipoproteins. The chain is Phosphatidylglycerol--prolipoprotein diacylglyceryl transferase from Leifsonia xyli subsp. xyli (strain CTCB07).